Consider the following 217-residue polypeptide: Urease accessory protein UreE (217 aa).

The interval 148 to 217 (AYGEAAAHGH…DHDHGSGHHH (70 aa)) is disordered. Residues 160–171 (AGHDHAHDHDHG) show a composition bias toward basic and acidic residues. A compositionally biased stretch (low complexity) spans 193 to 202 (AAAPAPHVHG). The segment covering 206–217 (GHDHDHGSGHHH) has biased composition (basic and acidic residues).

It belongs to the UreE family.

The protein resides in the cytoplasm. In terms of biological role, involved in urease metallocenter assembly. Binds nickel. Probably functions as a nickel donor during metallocenter assembly. The sequence is that of Urease accessory protein UreE from Methylibium petroleiphilum (strain ATCC BAA-1232 / LMG 22953 / PM1).